Here is a 260-residue protein sequence, read N- to C-terminus: Thymidylate synthase (260 aa).

Arg-21 is a binding site for dUMP. Position 51 (His-51) interacts with (6R)-5,10-methylene-5,6,7,8-tetrahydrofolate. 122–123 (RR) contacts dUMP. The Nucleophile role is filled by Cys-142. Residues 162-165 (RSAD), Asn-173, and 203-205 (HLY) contribute to the dUMP site. A (6R)-5,10-methylene-5,6,7,8-tetrahydrofolate-binding site is contributed by Asp-165. Residue Ala-259 coordinates (6R)-5,10-methylene-5,6,7,8-tetrahydrofolate.

Belongs to the thymidylate synthase family. Bacterial-type ThyA subfamily. Homodimer.

It is found in the cytoplasm. It catalyses the reaction dUMP + (6R)-5,10-methylene-5,6,7,8-tetrahydrofolate = 7,8-dihydrofolate + dTMP. It functions in the pathway pyrimidine metabolism; dTTP biosynthesis. Its function is as follows. Catalyzes the reductive methylation of 2'-deoxyuridine-5'-monophosphate (dUMP) to 2'-deoxythymidine-5'-monophosphate (dTMP) while utilizing 5,10-methylenetetrahydrofolate (mTHF) as the methyl donor and reductant in the reaction, yielding dihydrofolate (DHF) as a by-product. This enzymatic reaction provides an intracellular de novo source of dTMP, an essential precursor for DNA biosynthesis. This Methylococcus capsulatus (strain ATCC 33009 / NCIMB 11132 / Bath) protein is Thymidylate synthase.